The chain runs to 188 residues: Pro-adrenomedullin (188 aa).

Residues 1-21 form the signal peptide; that stretch reads MKLVPVALLYLGSLAFLGADT. The residue at position 41 (R41) is an Arginine amide. Positions 45 to 92 are excised as a propeptide; sequence ELRVSSSYPTGLAEVKAGPAQTLIRTQDVKGASRNPQTSGPDAARIRV. C110 and C115 form a disulfide bridge. Residues 131-176 form a disordered region; that stretch reads DKDGVAPRSKISPQGYGRRRRRSLPEPGLRRTLLFPEPRPGGAPAP. Y146 carries the post-translational modification Tyrosine amide. A propeptide spans 153-188 (preproAM C-terminal fragment); the sequence is SLPEPGLRRTLLFPEPRPGGAPAPRAHQVLANLLKM.

This sequence belongs to the adrenomedullin family.

It localises to the secreted. In terms of biological role, adrenomedullin/ADM and proadrenomedullin N-20 terminal peptide/PAMP are peptide hormones that act as potent hypotensive and vasodilatator agents. Numerous actions have been reported most related to the physiologic control of fluid and electrolyte homeostasis. Functionally, ADM function is mediated by the CALCRL-RAMP2 and CALCRL-RAMP3 receptor complexes with ADM showing the highest potency for the CALCRL-RAMP2 complex. The polypeptide is Pro-adrenomedullin (ADM) (Canis lupus familiaris (Dog)).